A 110-amino-acid polypeptide reads, in one-letter code: Nucleoid-associated protein Ent638_0951 (110 aa).

The protein belongs to the YbaB/EbfC family. In terms of assembly, homodimer.

The protein resides in the cytoplasm. It localises to the nucleoid. Functionally, binds to DNA and alters its conformation. May be involved in regulation of gene expression, nucleoid organization and DNA protection. The sequence is that of Nucleoid-associated protein Ent638_0951 from Enterobacter sp. (strain 638).